Consider the following 189-residue polypeptide: Large ribosomal subunit protein bL9 (189 aa).

This sequence belongs to the bacterial ribosomal protein bL9 family.

Binds to the 23S rRNA. This is Large ribosomal subunit protein bL9 from Brucella melitensis biotype 2 (strain ATCC 23457).